The following is a 317-amino-acid chain: Ribosomal protein L11 methyltransferase (317 aa).

S-adenosyl-L-methionine contacts are provided by T158, G179, D201, and N244.

This sequence belongs to the methyltransferase superfamily. PrmA family.

Its subcellular location is the cytoplasm. It carries out the reaction L-lysyl-[protein] + 3 S-adenosyl-L-methionine = N(6),N(6),N(6)-trimethyl-L-lysyl-[protein] + 3 S-adenosyl-L-homocysteine + 3 H(+). Methylates ribosomal protein L11. This Streptococcus pyogenes serotype M28 (strain MGAS6180) protein is Ribosomal protein L11 methyltransferase.